We begin with the raw amino-acid sequence, 653 residues long: E3 ubiquitin-protein ligase TRIM32 (653 aa).

Residue Ala2 is modified to N-acetylalanine. Residues 20–65 (CPICMESFTEEQLRPKLLHCGHTICRQCLEKLLASSINGVRCPFCS) form an RING-type zinc finger. Residue Ser55 is modified to Phosphoserine; by CHEK2. Zn(2+)-binding residues include Cys100, Cys103, Cys123, and His128. Residues 103–133 (CGRRLPRQFCRSCGLVLCEPCREADHQPPGH) form a B box-type zinc finger. Positions 138-197 (VKEAAEERRRDFGEKLTRLRELMGELQRRKAALEGVSKDLQARYKAVLQEYGHEERRVQD) form a coiled coil. Residues Ser328, Ser335, and Ser339 each carry the phosphoserine modification. NHL repeat units lie at residues 358-401 (LKKM…FTRK), 415-458 (DSFV…YTLD), 459-499 (GHCV…FTVD), 562-605 (GRQI…FPKG), and 606-646 (GGYS…YSYH).

Belongs to the TRIM/RBCC family. As to quaternary structure, it self-associates. Interacts with DTNBP1. Interacts with PIAS4/PIASY upon treatment with UVB and TNF-alpha. Interacts with AMBRA1; promoting activation of ULK1 through unanchored 'Lys-63'-linked polyubiquitin chains. Interacts with TICAM1 and TAX1BP1; these interactions target TICAM1 to TAX1BP1-mediated selective autophagic degradation. (Microbial infection) Interacts with S.typhimurium protein SseK3; SseK3 does not glycosylate TRIM32. Post-translationally, ubiquitinated. Phosphorylation at Ser-55 by CHEK2 under oxidative stress, activates the E3 ligase activity and promotes ATG7 ubiquitination leading to positive regulation of the autophagosme assembly. In terms of tissue distribution, spleen, thymus, prostate, testis, ovary, intestine, colon and skeletal muscle.

It is found in the cytoplasm. The protein resides in the mitochondrion. It localises to the endoplasmic reticulum. The enzyme catalyses S-ubiquitinyl-[E2 ubiquitin-conjugating enzyme]-L-cysteine + [acceptor protein]-L-lysine = [E2 ubiquitin-conjugating enzyme]-L-cysteine + N(6)-ubiquitinyl-[acceptor protein]-L-lysine.. The protein operates within protein modification; protein ubiquitination. In terms of biological role, E3 ubiquitin ligase that plays a role in various biological processes including neural stem cell differentiation, innate immunity, inflammatory resonse and autophagy. Plays a role in virus-triggered induction of IFN-beta and TNF-alpha by mediating the ubiquitination of STING1. Mechanistically, targets STING1 for 'Lys-63'-linked ubiquitination which promotes the interaction of STING1 with TBK1. Regulates bacterial clearance and promotes autophagy in Mycobacterium tuberculosis-infected macrophages. Negatively regulates TLR3/4-mediated innate immune and inflammatory response by triggering the autophagic degradation of TICAM1 in an E3 activity-independent manner. Plays an essential role in oxidative stress induced cell death by inducing loss of transmembrane potential and enhancing mitochondrial reactive oxygen species (ROS) production during oxidative stress conditions. Ubiquitinates XIAP and targets it for proteasomal degradation. Ubiquitinates DTNBP1 (dysbindin) and promotes its degradation. May ubiquitinate BBS2. Ubiquitinates PIAS4/PIASY and promotes its degradation in keratinocytes treated with UVB and TNF-alpha. Also acts as a regulator of autophagy by mediating formation of unanchored 'Lys-63'-linked polyubiquitin chains that activate ULK1: interaction with AMBRA1 is required for ULK1 activation. Positively regulates dendritic branching by promoting ubiquitination and subsequent degradation of the epigenetic factor CDYL. Under metabolic stress and phosphorylation by CHK2, mediates 'Lys-63'-linked ubiquitination of ATG7 at 'Lys-45' to initiate autophagy. Functionally, (Microbial infection) May play a significant role in mediating the biological activity of the HIV-1 Tat protein in vivo. Binds specifically to the activation domain of HIV-1 Tat and can also interact with the HIV-2 and EIAV Tat proteins in vivo. This chain is E3 ubiquitin-protein ligase TRIM32, found in Homo sapiens (Human).